The following is a 543-amino-acid chain: Zinc finger protein 852 (543 aa).

Residues 8–82 form the KRAB domain; that stretch reads VAYEDLSEDY…TSGGLFGVVP (75 aa). Phosphoserine is present on S145. C2H2-type zinc fingers lie at residues 159–181, 187–209, 215–237, 243–265, 271–293, 299–321, 327–349, 355–377, 383–405, 411–433, 439–461, and 467–489; these read YRCDECGKAFYWSSHLIGHRRIH, YECNECGKTFRQTSQLIVHLRTH, YECSECGKAYRHSSHLIQHQRLH, YKCNECAKAFNQSSKLFDHQRTH, YECKECGAAFSRSKNLVRHQFLH, YKCNECGRAFCSNRNLIDHQRTH, YKCNECGKAFSRSKCLIRHQSLH, YKCSECGKAFNQISQLVEHERIH, FKCSECGKAFGLSKCLIRHQRLH, YKCNECGKSFNQNSYLIIHQRIH, YECNECGKVFSYNSSLMVHQRTH, and YKCNSCGKAFSDSSQLTVHQRVH.

The protein belongs to the krueppel C2H2-type zinc-finger protein family.

The protein localises to the nucleus. Functionally, may be involved in transcriptional regulation. This Homo sapiens (Human) protein is Zinc finger protein 852 (ZNF852).